A 254-amino-acid chain; its full sequence is uncharacterized protein (254 aa).

The next 5 helical transmembrane spans lie at 33–53, 70–90, 92–112, 133–153, and 223–243; these read MLWVGVFIHLLYNKSLLLFFI, FNKLVYIGVFLFLLSFILFKS, FALSFLVFYLIGIFLYYLNFM, FIIFLNAILFVIPYCIFILLI, and FLVFICLSYILYIVSPFPLIF.

The protein to M.jannaschii MJ0902.

The protein localises to the cell membrane. This is an uncharacterized protein from Methanocaldococcus jannaschii (strain ATCC 43067 / DSM 2661 / JAL-1 / JCM 10045 / NBRC 100440) (Methanococcus jannaschii).